We begin with the raw amino-acid sequence, 260 residues long: Proansamycin X synthase (260 aa).

Cysteine 73 (acyl-thioester intermediate) is an active-site residue. Residues histidine 111 and aspartate 126 contribute to the active site.

The protein belongs to the arylamine N-acetyltransferase family.

It participates in antibiotic biosynthesis; rifamycin B biosynthesis. Catalyzes the release of the completed linear polyketide from the rif PKS by forming an intramolecular amide bond, in this way terminating polyketide assembly and forming the macrocyclic compound proansamycin X, an intermediate in the rifamycin B biosynthesis. The sequence is that of Proansamycin X synthase (rifF) from Amycolatopsis mediterranei (strain S699) (Nocardia mediterranei).